Consider the following 151-residue polypeptide: Large ribosomal subunit protein uL13 (151 aa).

The tract at residues 126–151 is disordered; the sequence is YPGSNHPHEAQKPEKLTIQTIPGGER. The span at 131–140 shows a compositional bias: basic and acidic residues; the sequence is HPHEAQKPEK.

Belongs to the universal ribosomal protein uL13 family. Part of the 50S ribosomal subunit.

Functionally, this protein is one of the early assembly proteins of the 50S ribosomal subunit, although it is not seen to bind rRNA by itself. It is important during the early stages of 50S assembly. The protein is Large ribosomal subunit protein uL13 of Trichodesmium erythraeum (strain IMS101).